We begin with the raw amino-acid sequence, 613 residues long: Proton myo-inositol cotransporter hmit-1.2 (613 aa).

At 1 to 21 (MVAVEFKVSESGRPRPEKNPK) the chain is on the cytoplasmic side. A helical transmembrane segment spans residues 22–42 (LGFFVYLLGSAAIIGGFLFGY). At 43 to 69 (DTSVVSAAMLYVPEAPGLKPMGTVWKE) the chain is on the extracellular side. A helical transmembrane segment spans residues 70–90 (VIVSITPGMAAVGAWFSGAGS). Residues 91–96 (DRYGRK) are Cytoplasmic-facing. Residues 97-117 (PIIIGSTLIFVCGAVICAVAW) form a helical membrane-spanning segment. At 118–119 (TK) the chain is on the extracellular side. Residues 120-140 (IVMLIGRIFLGVGIGFASMVV) form a helical membrane-spanning segment. Residues 141–157 (PVYLGEASPTHVRGTLV) are Cytoplasmic-facing. The helical transmembrane segment at 158–178 (SAFAMMISFGQVVANIMGGVF) threads the bilayer. At 179–189 (SYWEPYTIGWR) the chain is on the extracellular side. Residues 190-210 (LMFAFAGIPALIQFVCFIFLP) form a helical membrane-spanning segment. Residues 211–279 (ETPRWLYENG…RILKTPHVLK (69 aa)) are Cytoplasmic-facing. Residues 280-300 (ACFIGSMLQAFQQLAGINTIL) form a helical membrane-spanning segment. Over 301-317 (YYTADIIRSAGIENYHT) the chain is Extracellular. The helical transmembrane segment at 318 to 338 (IIWISVILSICNLIGPFAPMF) threads the bilayer. Residues 339–347 (FIEKLGRRK) are Cytoplasmic-facing. The chain crosses the membrane as a helical span at residues 348–368 (LFLFSCAGVVVSLVLIGVSFL). The Extracellular segment spans residues 369 to 472 (LVGNDSAPNF…QKHHCTTSYT (104 aa)). Asn372, Asn451, and Asn456 each carry an N-linked (GlcNAc...) asparagine glycan. The helical transmembrane segment at 473 to 493 (ILPIVMMGVYLLTFSCGFTSL) threads the bilayer. Residues 494 to 515 (PWVLNSEFYPMWARSTCVSIST) are Cytoplasmic-facing. Residues 516 to 536 (LSNWVFNLIIALTYLSLTHAI) form a helical membrane-spanning segment. Residues 537–539 (TKY) lie on the Extracellular side of the membrane. The helical transmembrane segment at 540 to 560 (GAFWLYAIFTIIAFIFIYFLV) threads the bilayer. Residues 561-613 (PETTGYSIDEVEMLFMNKRQRNIAMQARQAKLDAASDKDKNSSTSLSTETITM) are Cytoplasmic-facing. The segment at 594-613 (AASDKDKNSSTSLSTETITM) is disordered. A compositionally biased stretch (polar residues) spans 602–613 (SSTSLSTETITM).

This sequence belongs to the major facilitator superfamily. Sugar transporter (TC 2.A.1.1) family. Expressed in the excretory canal cell and in pairs of amphid and sheath glia.

It localises to the cell membrane. The protein resides in the perikaryon. It catalyses the reaction myo-inositol(out) + H(+)(out) = myo-inositol(in) + H(+)(in). Its function is as follows. H(+)-myo-inositol cotransporter. Probably by promoting the transport of myo-inositol regulates intracellular osmosis in response to hyperosmotic stress. This chain is Proton myo-inositol cotransporter hmit-1.2, found in Caenorhabditis elegans.